Reading from the N-terminus, the 279-residue chain is Diaminopimelate epimerase (279 aa).

The substrate site is built by Asn12, Gln45, and Asn65. Residue Cys74 is the Proton donor of the active site. Substrate-binding positions include Gly75 to Asn76, Asn162, Asn195, and Glu213 to Arg214. Cys222 serves as the catalytic Proton acceptor. Gly223–Ser224 contacts substrate.

This sequence belongs to the diaminopimelate epimerase family. Homodimer.

The protein localises to the cytoplasm. The catalysed reaction is (2S,6S)-2,6-diaminopimelate = meso-2,6-diaminopimelate. Its pathway is amino-acid biosynthesis; L-lysine biosynthesis via DAP pathway; DL-2,6-diaminopimelate from LL-2,6-diaminopimelate: step 1/1. Its function is as follows. Catalyzes the stereoinversion of LL-2,6-diaminopimelate (L,L-DAP) to meso-diaminopimelate (meso-DAP), a precursor of L-lysine and an essential component of the bacterial peptidoglycan. The polypeptide is Diaminopimelate epimerase (Shewanella loihica (strain ATCC BAA-1088 / PV-4)).